We begin with the raw amino-acid sequence, 130 residues long: Large ribosomal subunit protein uL22 (130 aa).

It belongs to the universal ribosomal protein uL22 family. In terms of assembly, part of the 50S ribosomal subunit.

Functionally, this protein binds specifically to 23S rRNA; its binding is stimulated by other ribosomal proteins, e.g. L4, L17, and L20. It is important during the early stages of 50S assembly. It makes multiple contacts with different domains of the 23S rRNA in the assembled 50S subunit and ribosome. Its function is as follows. The globular domain of the protein is located near the polypeptide exit tunnel on the outside of the subunit, while an extended beta-hairpin is found that lines the wall of the exit tunnel in the center of the 70S ribosome. This chain is Large ribosomal subunit protein uL22, found in Clavibacter michiganensis subsp. michiganensis (strain NCPPB 382).